A 438-amino-acid polypeptide reads, in one-letter code: Probable glucose-6-phosphate isomerase (438 aa).

The Proton donor role is filled by Glu-280. Residues His-301 and Lys-410 contribute to the active site.

This sequence belongs to the GPI family.

Its subcellular location is the cytoplasm. The enzyme catalyses alpha-D-glucose 6-phosphate = beta-D-fructose 6-phosphate. It functions in the pathway carbohydrate biosynthesis; gluconeogenesis. The protein operates within carbohydrate degradation; glycolysis; D-glyceraldehyde 3-phosphate and glycerone phosphate from D-glucose: step 2/4. In terms of biological role, catalyzes the reversible isomerization of glucose-6-phosphate to fructose-6-phosphate. The polypeptide is Probable glucose-6-phosphate isomerase (Methanococcus maripaludis (strain DSM 14266 / JCM 13030 / NBRC 101832 / S2 / LL)).